A 224-amino-acid polypeptide reads, in one-letter code: Metalloproteinase inhibitor 4 (224 aa).

An N-terminal signal peptide occupies residues 1-29; sequence MPGSPRPAPSWVLLLRLLALLRPPGLGEA. C30 is a Zn(2+) binding site. 2 involved in metalloproteinase-binding regions span residues 30–33 and 99–100; these read CSCA and SS. 6 disulfide bridges follow: C30–C102, C32–C131, C42–C156, C158–C205, C163–C168, and C176–C197. Residues 30 to 156 form the NTR domain; the sequence is CSCAPAHPQQ…SLNHHYHLNC (127 aa).

It belongs to the protease inhibitor I35 (TIMP) family. Abundant in heart and present at low levels in many other tissues.

It localises to the secreted. Functionally, complexes with metalloproteinases (such as collagenases) and irreversibly inactivates them by binding to their catalytic zinc cofactor. Known to act on MMP-1, MMP-2, MMP-3, MMP-7 and MMP-9. This chain is Metalloproteinase inhibitor 4 (TIMP4), found in Homo sapiens (Human).